The sequence spans 249 residues: MAERGELDLTGAKQNTGVWLVKVPKYLSQQWAKAPGRGEVGKLRIAKNQGRTEVSFTLNEDLANIHDIGGKPASVSAPREHPFVLQSVGGQTLTVFTESSSDKLSLEGIVVQRAECRPAASENYMKLKRLQIEESSKPVRLSQQADKVVTTNYKPVANHQYNIEYERKKKEDGKRARADKQHVLDMLFSAFEKHQYYNLKDLVDITKQPVGYLKEILKEIGIQNVKGIHKNTWELKPEYRHYQTEEKSD.

Ala2 is modified (N-acetylalanine). Lys22, Lys33, and Lys137 each carry N6-acetyllysine. Ser142 bears the Phosphoserine mark. DNA contacts are provided by Gly227 and His229. The residue at position 248 (Ser248) is a Phosphoserine.

The protein belongs to the TFIIF beta subunit family. In terms of assembly, heterodimer of an alpha and a beta subunit. Interacts with HTATSF1 and GPBP1. Interacts with URI1. Interacts with GTF2B (via N-terminus); this interaction is inhibited in presence of GTF2F1. Part of TBP-based Pol II pre-initiation complex (PIC), in which Pol II core assembles with general transcription factors and other specific initiation factors including GTF2E1, GTF2E2, GTF2F1, GTF2F2, TCEA1, ERCC2, ERCC3, GTF2H2, GTF2H3, GTF2H4, GTF2H5, GTF2A1, GTF2A2, GTF2B and TBP; this large multi-subunit PIC complex mediates DNA unwinding and targets Pol II core to the transcription start site where the first phosphodiester bond forms.

It is found in the nucleus. TFIIF is a general transcription initiation factor that binds to RNA polymerase II and helps to recruit it to the initiation complex in collaboration with TFIIB. It promotes transcription elongation. This chain is General transcription factor IIF subunit 2 (Gtf2f2), found in Rattus norvegicus (Rat).